A 547-amino-acid polypeptide reads, in one-letter code: Chaperonin GroEL (547 aa).

ATP-binding positions include 30–33, Lys51, 87–91, Gly415, and Asp496; these read TLGP and DGTTT. Residues 528–547 form a disordered region; the sequence is KEGAAPAGGMPDMGGMGGMM. A compositionally biased stretch (gly residues) spans 538–547; the sequence is PDMGGMGGMM.

Belongs to the chaperonin (HSP60) family. Forms a cylinder of 14 subunits composed of two heptameric rings stacked back-to-back. Interacts with the co-chaperonin GroES.

It is found in the cytoplasm. The catalysed reaction is ATP + H2O + a folded polypeptide = ADP + phosphate + an unfolded polypeptide.. Functionally, together with its co-chaperonin GroES, plays an essential role in assisting protein folding. The GroEL-GroES system forms a nano-cage that allows encapsulation of the non-native substrate proteins and provides a physical environment optimized to promote and accelerate protein folding. The sequence is that of Chaperonin GroEL from Ruegeria sp. (strain TM1040) (Silicibacter sp.).